We begin with the raw amino-acid sequence, 361 residues long: Septin-12 (361 aa).

One can recognise a Septin-type G domain in the interval 45–316 (MGFEFNIMVV…ENYRIIRLKE (272 aa)). The interval 45–318 (MGFEFNIMVV…YRIIRLKESH (274 aa)) is interaction with SEPTIN7. Positions 55–62 (GQSGLGKS) are G1 motif. Residues 55–62 (GQSGLGKS), Thr-88, Gly-114, 194–202 (RADSLTIEE), Gly-250, and Arg-265 contribute to the GTP site. Residues 111-114 (DTPG) are G3 motif. Residues 193 to 196 (ARAD) form a G4 motif region. Positions 257 to 361 (VNGRCVLGRK…WAEDNSDEDF (105 aa)) are self-association (via N-terminus) to polymerize octameric septin 12-7-6-2/4-2/4-6-7-12 filaments. Positions 333-361 (PPPAPTGTRASPGPAKMCRWAEDNSDEDF) are disordered. Residues 338-347 (TGTRASPGPA) are compositionally biased toward low complexity.

Belongs to the TRAFAC class TrmE-Era-EngA-EngB-Septin-like GTPase superfamily. Septin GTPase family. As to quaternary structure, septins polymerize into heterooligomeric protein complexes that form filaments, and can associate with cellular membranes, actin filaments and microtubules. GTPase activity is required for filament formation. Interacts with SEPTIN6 and SEPTIN11. Component of a octameric complex consisting of SEPTIN12, SEPTIN7, SEPTIN6 and SEPTIN2 or SEPTIN4 in the order 12-7-6-2-2-6-7-12 or 12-7-6-4-4-6-7-12 and located in the sperm annulus; the octamer polymerizes into filaments via the SEPTIN12 N- and C-termini; the SEPTIN12:SEPTIN7 association is mediated by the GTP-binding domains. Interacts with SPAG4 and LMNB1. Associates with alpha- and beta-tubulins.

It is found in the cytoplasm. The protein localises to the cytoskeleton. The protein resides in the spindle. Its subcellular location is the cell projection. It localises to the cilium. It is found in the flagellum. Functionally, filament-forming cytoskeletal GTPase. May play a role in cytokinesis (Potential). Involved in spermatogenesis. Involved in the morphogenesis of sperm heads and the elongation of sperm tails probably implicating the association with alpha- and beta-tubulins. Forms a filamentous structure with SEPTIN7, SEPTIN6, SEPTIN2 and probably SEPTIN4 at the sperm annulus which is required for the structural integrity and motility of the sperm tail during postmeiotic differentiation. In Bos taurus (Bovine), this protein is Septin-12.